Reading from the N-terminus, the 452-residue chain is Phosphoglucosamine mutase (452 aa).

Residue Ser108 is the Phosphoserine intermediate of the active site. Mg(2+) is bound by residues Ser108, Asp247, Asp249, and Asp251. Ser108 carries the phosphoserine modification.

The protein belongs to the phosphohexose mutase family. Requires Mg(2+) as cofactor. Post-translationally, activated by phosphorylation.

It carries out the reaction alpha-D-glucosamine 1-phosphate = D-glucosamine 6-phosphate. In terms of biological role, catalyzes the conversion of glucosamine-6-phosphate to glucosamine-1-phosphate. The protein is Phosphoglucosamine mutase of Burkholderia pseudomallei (strain 668).